A 412-amino-acid chain; its full sequence is Multifunctional CCA protein (412 aa).

Gly-8 and Arg-11 together coordinate ATP. Residues Gly-8 and Arg-11 each contribute to the CTP site. Residues Asp-21 and Asp-23 each contribute to the Mg(2+) site. Residues Arg-91, Arg-137, and Arg-140 each coordinate ATP. CTP contacts are provided by Arg-91, Arg-137, and Arg-140. One can recognise an HD domain in the interval 225–326; the sequence is TGIHVMMVID…ADMLQATDAY (102 aa).

The protein belongs to the tRNA nucleotidyltransferase/poly(A) polymerase family. Bacterial CCA-adding enzyme type 1 subfamily. In terms of assembly, monomer. Can also form homodimers and oligomers. The cofactor is Mg(2+). Requires Ni(2+) as cofactor.

It catalyses the reaction a tRNA precursor + 2 CTP + ATP = a tRNA with a 3' CCA end + 3 diphosphate. It carries out the reaction a tRNA with a 3' CCA end + 2 CTP + ATP = a tRNA with a 3' CCACCA end + 3 diphosphate. Its function is as follows. Catalyzes the addition and repair of the essential 3'-terminal CCA sequence in tRNAs without using a nucleic acid template. Adds these three nucleotides in the order of C, C, and A to the tRNA nucleotide-73, using CTP and ATP as substrates and producing inorganic pyrophosphate. tRNA 3'-terminal CCA addition is required both for tRNA processing and repair. Also involved in tRNA surveillance by mediating tandem CCA addition to generate a CCACCA at the 3' terminus of unstable tRNAs. While stable tRNAs receive only 3'-terminal CCA, unstable tRNAs are marked with CCACCA and rapidly degraded. In Nitrosomonas europaea (strain ATCC 19718 / CIP 103999 / KCTC 2705 / NBRC 14298), this protein is Multifunctional CCA protein.